The primary structure comprises 194 residues: Translation machinery-associated protein 22 (194 aa).

Residues 102 to 173 (VQIKRVERNK…DVKEWLLELY (72 aa)) form the SUI1 domain.

This sequence belongs to the DENR family. As to quaternary structure, interacts with the 40S ribosomal subunit.

It is found in the cytoplasm. This is Translation machinery-associated protein 22 (tma22) from Aspergillus fumigatus (strain ATCC MYA-4609 / CBS 101355 / FGSC A1100 / Af293) (Neosartorya fumigata).